Consider the following 309-residue polypeptide: Probable non-structural 36.3 kDa protein (309 aa).

In Avena sativa (Oat), this protein is Probable non-structural 36.3 kDa protein (S6).